The sequence spans 89 residues: Small ribosomal subunit protein uS14 (89 aa).

This sequence belongs to the universal ribosomal protein uS14 family. As to quaternary structure, part of the 30S ribosomal subunit. Contacts proteins S3 and S10.

In terms of biological role, binds 16S rRNA, required for the assembly of 30S particles and may also be responsible for determining the conformation of the 16S rRNA at the A site. The chain is Small ribosomal subunit protein uS14 from Acholeplasma laidlawii (strain PG-8A).